The following is an 883-amino-acid chain: Lethal(3)malignant brain tumor-like protein 3 (883 aa).

The interval 1–64 is interaction with RBPJ. Required for transcription repressor activity on Notch target genes; sequence MTESASSTSG…VKKATATTTW (64 aa). The segment covering 146 to 156 has biased composition (basic and acidic residues); that stretch reads HAKDKDQKDER. The segment at 146–223 is disordered; the sequence is HAKDKDQKDE…RGDSAVLKQG (78 aa). Composition is skewed to acidic residues over residues 157–166 and 185–194; these read DGGEDNDEED and DDGEERDDEM. 3 MBT repeats span residues 232 to 332, 340 to 439, and 448 to 543; these read WCWA…LRPP, FNWQ…LITP, and FSWD…LQAP. A CCHHC-type; degenerate zinc finger spans residues 549–593; that stretch reads LMEPSETGGCPTLGCRGVGHFKKSRYLGTQSGANCPYSEINLSKE. Positions 595 to 768 are disordered; the sequence is IFPDRLSGDT…TQQQAQTQQQ (174 aa). The span at 616-662 shows a compositional bias: basic and acidic residues; the sequence is KRMDTRESSSSPETREKHANNFKEDSEKKKENEVKTSAEAKVVREEP. K638 participates in a covalent cross-link: Glycyl lysine isopeptide (Lys-Gly) (interchain with G-Cter in SUMO2). Composition is skewed to low complexity over residues 663-742 and 749-768; these read TPSV…QQPQ and QPQQ…TQQQ. One can recognise an SAM domain in the interval 811–875; that stretch reads WSTDEVSEFI…FNSILMFKAA (65 aa).

Interacts with RNF2. Interacts (via SAM domain) with SAMD1 (via SAM domain); the interaction mediates L3MBTL3 binding to chromatin. Interacts with RBPJ; the interaction is required for L3MBTL3 localization to chromatin and is impaired the Notch-derived peptides containing the intracellular domain (NICD). Interacts (via SAM domain) with KDM1A. Interacts with DCAF5. Interacts with DNMT1. Interacts with E2F1. Interacts with SOX2. Interacts with SFMBT1. Detected in hematopoietic progenitor cells in fetal liver. Detected in adult bone marrow, heart, brain, spleen, lung, liver, kidney and testis.

It localises to the nucleus. Functionally, is a negative regulator of Notch target genes expression, required for RBPJ-mediated transcriptional repression. It recruits KDM1A to Notch-responsive elements and promotes KDM1A-mediated H3K4me demethylation. Involved in the regulation of ubiquitin-dependent degradation of a set of methylated non-histone proteins, including SOX2. It acts as an adapter recruiting the CRL4-DCAF5 E3 ubiquitin ligase complex to methylated target proteins. Also involved in the regulation of ubiquitin-dependent degradation of methylated DNMT1 and E2F1. Required for normal maturation of myeloid progenitor cells. The protein is Lethal(3)malignant brain tumor-like protein 3 of Mus musculus (Mouse).